We begin with the raw amino-acid sequence, 217 residues long: UPF0711 protein C18orf21 homolog (217 aa).

Ser126 bears the Phosphoserine mark. Phosphothreonine is present on residues Thr130 and Thr139. The segment at 131–190 is disordered; it reads AANKASPKTPKRTAPGSANLGQSTNGSKGKSPSLTIRTPTSGQSTPICSSRNGSKRKKHF. The segment covering 149–182 has biased composition (polar residues); that stretch reads NLGQSTNGSKGKSPSLTIRTPTSGQSTPICSSRN.

It belongs to the UPF0711 family.

The polypeptide is UPF0711 protein C18orf21 homolog (Mus musculus (Mouse)).